The following is a 363-amino-acid chain: Flagellar P-ring protein (363 aa).

Positions 1-20 (MKKFTLLLLCFVLPMTSAYA) are cleaved as a signal peptide.

It belongs to the FlgI family. In terms of assembly, the basal body constitutes a major portion of the flagellar organelle and consists of four rings (L,P,S, and M) mounted on a central rod.

It is found in the periplasm. The protein resides in the bacterial flagellum basal body. In terms of biological role, assembles around the rod to form the L-ring and probably protects the motor/basal body from shearing forces during rotation. The protein is Flagellar P-ring protein of Vibrio vulnificus (strain YJ016).